The chain runs to 179 residues: Large ribosomal subunit protein uL6 (179 aa).

This sequence belongs to the universal ribosomal protein uL6 family. As to quaternary structure, part of the 50S ribosomal subunit.

Functionally, this protein binds to the 23S rRNA, and is important in its secondary structure. It is located near the subunit interface in the base of the L7/L12 stalk, and near the tRNA binding site of the peptidyltransferase center. The sequence is that of Large ribosomal subunit protein uL6 from Bifidobacterium animalis subsp. lactis (strain AD011).